The primary structure comprises 470 residues: 6-phospho-beta-galactosidase 1 (470 aa).

Gln-23, His-120, Asn-163, Glu-164, and Asn-300 together coordinate D-galactose 6-phosphate. The Proton donor role is filled by Glu-164. Glu-378 (nucleophile) is an active-site residue. Ser-434, Trp-435, Lys-441, and Tyr-443 together coordinate D-galactose 6-phosphate.

This sequence belongs to the glycosyl hydrolase 1 family.

It carries out the reaction a 6-phospho-beta-D-galactoside + H2O = D-galactose 6-phosphate + an alcohol. Its pathway is carbohydrate metabolism; lactose degradation; D-galactose 6-phosphate and beta-D-glucose from lactose 6-phosphate: step 1/1. The protein is 6-phospho-beta-galactosidase 1 of Streptococcus pneumoniae serotype 4 (strain ATCC BAA-334 / TIGR4).